The sequence spans 594 residues: Proteasome-associated ATPase (594 aa).

Over residues 1–10 (MMETPNNDSS) the composition is skewed to polar residues. Residues 1–23 (MMETPNNDSSRTPDEAAGAPDPE) are disordered. Positions 35–86 (ADRQVNILRDKLRHIDRQLAAATQNNSKLVGMLETAKAEILRLKNALDQEGQ) form a coiled coil. 282–287 (GCGKTL) contacts ATP. Residues 593-594 (YL) form a docks into pockets in the proteasome alpha-ring region.

This sequence belongs to the AAA ATPase family. In terms of assembly, homohexamer. Assembles into a hexameric ring structure that caps the 20S proteasome core. Strongly interacts with the prokaryotic ubiquitin-like protein Pup through a hydrophobic interface; the interacting region of ARC lies in its N-terminal coiled-coil domain. There is one Pup binding site per ARC hexamer ring. Upon ATP-binding, the C-terminus of ARC interacts with the alpha-rings of the proteasome core, possibly by binding to the intersubunit pockets.

The protein operates within protein degradation; proteasomal Pup-dependent pathway. In terms of biological role, ATPase which is responsible for recognizing, binding, unfolding and translocation of pupylated proteins into the bacterial 20S proteasome core particle. May be essential for opening the gate of the 20S proteasome via an interaction with its C-terminus, thereby allowing substrate entry and access to the site of proteolysis. Thus, the C-termini of the proteasomal ATPase may function like a 'key in a lock' to induce gate opening and therefore regulate proteolysis. The polypeptide is Proteasome-associated ATPase (Arthrobacter sp. (strain FB24)).